We begin with the raw amino-acid sequence, 328 residues long: Ribosomal RNA small subunit methyltransferase H (328 aa).

S-adenosyl-L-methionine contacts are provided by residues 37 to 39, D57, F83, D104, and Q111; that span reads GGH.

It belongs to the methyltransferase superfamily. RsmH family.

Its subcellular location is the cytoplasm. The enzyme catalyses cytidine(1402) in 16S rRNA + S-adenosyl-L-methionine = N(4)-methylcytidine(1402) in 16S rRNA + S-adenosyl-L-homocysteine + H(+). Functionally, specifically methylates the N4 position of cytidine in position 1402 (C1402) of 16S rRNA. The protein is Ribosomal RNA small subunit methyltransferase H of Neisseria meningitidis serogroup B (strain ATCC BAA-335 / MC58).